Here is a 771-residue protein sequence, read N- to C-terminus: DNA polymerase 1 (771 aa).

The protein belongs to the DNA polymerase type-B family.

The catalysed reaction is DNA(n) + a 2'-deoxyribonucleoside 5'-triphosphate = DNA(n+1) + diphosphate. This is DNA polymerase 1 (polI) from Pyrococcus abyssi.